The sequence spans 444 residues: Tubulin beta 8B (444 aa).

Residues M1–I4 carry the MREI motif motif. GTP is bound by residues Q11, E69, S138, G142, T143, and G144. E69 lines the Mg(2+) pocket. S172 carries the post-translational modification Phosphoserine; by CDK1. N204 and N226 together coordinate GTP. Residues E421–A444 form a disordered region. The span at T429–A444 shows a compositional bias: acidic residues. A 5-glutamyl polyglutamate modification is found at E436.

This sequence belongs to the tubulin family. In terms of assembly, dimer of alpha and beta chains. A typical microtubule is a hollow water-filled tube with an outer diameter of 25 nm and an inner diameter of 15 nM. Alpha-beta heterodimers associate head-to-tail to form protofilaments running lengthwise along the microtubule wall with the beta-tubulin subunit facing the microtubule plus end conferring a structural polarity. Microtubules usually have 13 protofilaments but different protofilament numbers can be found in some organisms and specialized cells. Mg(2+) is required as a cofactor. Post-translationally, some glutamate residues at the C-terminus are polyglutamylated, resulting in polyglutamate chains on the gamma-carboxyl group. Polyglutamylation plays a key role in microtubule severing by spastin (SPAST). SPAST preferentially recognizes and acts on microtubules decorated with short polyglutamate tails: severing activity by SPAST increases as the number of glutamates per tubulin rises from one to eight, but decreases beyond this glutamylation threshold. Glutamylation is also involved in cilia motility. Some glutamate residues at the C-terminus are monoglycylated but not polyglycylated due to the absence of functional TTLL10 in human. Monoglycylation is mainly limited to tubulin incorporated into cilia and flagella axonemes, which is required for their stability and maintenance. Flagella glycylation controls sperm motility. Both polyglutamylation and monoglycylation can coexist on the same protein on adjacent residues, and lowering glycylation levels increases polyglutamylation, and reciprocally. In terms of processing, phosphorylated on Ser-172 by CDK1 during the cell cycle, from metaphase to telophase, but not in interphase. This phosphorylation inhibits tubulin incorporation into microtubules.

Its subcellular location is the cytoplasm. It is found in the cytoskeleton. Its function is as follows. Tubulin is the major constituent of microtubules, a cylinder consisting of laterally associated linear protofilaments composed of alpha- and beta-tubulin heterodimers. Microtubules grow by the addition of GTP-tubulin dimers to the microtubule end, where a stabilizing cap forms. Below the cap, tubulin dimers are in GDP-bound state, owing to GTPase activity of alpha-tubulin. The polypeptide is Tubulin beta 8B (Homo sapiens (Human)).